We begin with the raw amino-acid sequence, 205 residues long: High frequency lysogenization protein HflD homolog (205 aa).

It belongs to the HflD family.

The protein localises to the cytoplasm. The protein resides in the cell inner membrane. In Vibrio vulnificus (strain CMCP6), this protein is High frequency lysogenization protein HflD homolog.